The primary structure comprises 286 residues: 5'-3' exonuclease (286 aa).

In terms of domain architecture, 5'-3' exonuclease spans 172–270 (IKPKEFIDFL…IKLKDIILKK (99 aa)).

In terms of biological role, 5'-3' exonuclease acting preferentially on double-stranded DNA. This is 5'-3' exonuclease from Buchnera aphidicola subsp. Acyrthosiphon pisum (strain APS) (Acyrthosiphon pisum symbiotic bacterium).